The primary structure comprises 290 residues: Glycine--tRNA ligase alpha subunit (290 aa).

The protein belongs to the class-II aminoacyl-tRNA synthetase family. Tetramer of two alpha and two beta subunits.

Its subcellular location is the cytoplasm. It carries out the reaction tRNA(Gly) + glycine + ATP = glycyl-tRNA(Gly) + AMP + diphosphate. The polypeptide is Glycine--tRNA ligase alpha subunit (Brachyspira hyodysenteriae (strain ATCC 49526 / WA1)).